A 582-amino-acid polypeptide reads, in one-letter code: 2-succinyl-5-enolpyruvyl-6-hydroxy-3-cyclohexene-1-carboxylate synthase (582 aa).

This sequence belongs to the TPP enzyme family. MenD subfamily. As to quaternary structure, homodimer. Mg(2+) is required as a cofactor. The cofactor is Mn(2+). Requires thiamine diphosphate as cofactor.

The enzyme catalyses isochorismate + 2-oxoglutarate + H(+) = 5-enolpyruvoyl-6-hydroxy-2-succinyl-cyclohex-3-ene-1-carboxylate + CO2. Its pathway is quinol/quinone metabolism; 1,4-dihydroxy-2-naphthoate biosynthesis; 1,4-dihydroxy-2-naphthoate from chorismate: step 2/7. It participates in cofactor biosynthesis; phylloquinone biosynthesis. Catalyzes the thiamine diphosphate-dependent decarboxylation of 2-oxoglutarate and the subsequent addition of the resulting succinic semialdehyde-thiamine pyrophosphate anion to isochorismate to yield 2-succinyl-5-enolpyruvyl-6-hydroxy-3-cyclohexene-1-carboxylate (SEPHCHC). In Prochlorococcus marinus (strain MIT 9313), this protein is 2-succinyl-5-enolpyruvyl-6-hydroxy-3-cyclohexene-1-carboxylate synthase.